Consider the following 189-residue polypeptide: Prostaglandin-H2 D-isomerase (189 aa).

The first 24 residues, 1–24 (MAALRMLWMGLVLLGLLGFPQTPA), serve as a signal peptide directing secretion. Residue Q25 is modified to Pyrrolidone carboxylic acid. N-linked (GlcNAc...) asparagine glycosylation is present at N51. Residue C65 is the Nucleophile of the active site. N-linked (GlcNAc...) asparagine glycosylation occurs at N78. The cysteines at positions 89 and 186 are disulfide-linked.

The protein belongs to the calycin superfamily. Lipocalin family. In terms of assembly, monomer. As to expression, abundant in the brain and CNS, where it is expressed in tissues of the blood-brain barrier and secreted into the cerebro-spinal fluid. In the male reproductive system, it is expressed in the testis, efferent ducts and epididymis, and is secreted into the seminal fluid. In the eye, it is expressed in the pigmented epithelium of the retina and the nonpigmented epithelium of the ciliary body, and secreted into the aqueous humor. Low levels detected in various tissue fluids such as serum, normal urine, ascitic fluid and tear fluid. Also found in a number of other organs including the ear, heart and lung.

Its subcellular location is the rough endoplasmic reticulum. The protein resides in the nucleus membrane. It localises to the golgi apparatus. It is found in the cytoplasm. The protein localises to the perinuclear region. Its subcellular location is the secreted. It carries out the reaction prostaglandin H2 = prostaglandin D2. Catalyzes the conversion of PGH2 to PGD2, a prostaglandin involved in smooth muscle contraction/relaxation and a potent inhibitor of platelet aggregation. Involved in a variety of CNS functions, such as sedation, NREM sleep and PGE2-induced allodynia, and may have an anti-apoptotic role in oligodendrocytes. Binds small non-substrate lipophilic molecules, including biliverdin, bilirubin, retinal, retinoic acid and thyroid hormone, and may act as a scavenger for harmful hydrophobic molecules and as a secretory retinoid and thyroid hormone transporter. Possibly involved in development and maintenance of the blood-brain, blood-retina, blood-aqueous humor and blood-testis barrier. It is likely to play important roles in both maturation and maintenance of the central nervous system and male reproductive system. Involved in PLA2G3-dependent maturation of mast cells. PLA2G3 is secreted by immature mast cells and acts on nearby fibroblasts upstream to PTDGS to synthesize PGD2, which in turn promotes mast cell maturation and degranulation via PTGDR. In Mus musculus (Mouse), this protein is Prostaglandin-H2 D-isomerase (Ptgds).